Reading from the N-terminus, the 122-residue chain is Large ribosomal subunit protein uL14 (122 aa).

This sequence belongs to the universal ribosomal protein uL14 family. As to quaternary structure, part of the 50S ribosomal subunit. Forms a cluster with proteins L3 and L19. In the 70S ribosome, L14 and L19 interact and together make contacts with the 16S rRNA in bridges B5 and B8.

In terms of biological role, binds to 23S rRNA. Forms part of two intersubunit bridges in the 70S ribosome. The sequence is that of Large ribosomal subunit protein uL14 from Bacillus pumilus (strain SAFR-032).